Consider the following 173-residue polypeptide: Ribosome maturation factor RimM (173 aa).

Residues 97 to 171 (EGEFFYHEII…QITIEPMEGL (75 aa)) enclose the PRC barrel domain.

It belongs to the RimM family. As to quaternary structure, binds ribosomal protein uS19.

It localises to the cytoplasm. An accessory protein needed during the final step in the assembly of 30S ribosomal subunit, possibly for assembly of the head region. Essential for efficient processing of 16S rRNA. May be needed both before and after RbfA during the maturation of 16S rRNA. It has affinity for free ribosomal 30S subunits but not for 70S ribosomes. The polypeptide is Ribosome maturation factor RimM (Halalkalibacterium halodurans (strain ATCC BAA-125 / DSM 18197 / FERM 7344 / JCM 9153 / C-125) (Bacillus halodurans)).